Consider the following 309-residue polypeptide: Phytoene synthase (309 aa).

The protein belongs to the phytoene/squalene synthase family. ATP serves as cofactor. The cofactor is Mn(2+). Requires Mg(2+) as cofactor.

It participates in carotenoid biosynthesis; phytoene biosynthesis. In terms of biological role, involved in the biosynthesis of carotenoids. Catalyzes the condensation of two molecules of geranylgeranyl diphosphate (GGPP) to give prephytoene diphosphate (PPPP) and the subsequent rearrangement of the cyclopropylcarbinyl intermediate to yield phytoene. The protein is Phytoene synthase (crtB) of Pseudescherichia vulneris (Escherichia vulneris).